Reading from the N-terminus, the 690-residue chain is DNA topoisomerase 1 (690 aa).

The Toprim domain maps to 3–121; it reads DYLVIVESPA…EITKQAIKDA (119 aa). Positions 9 and 82 each coordinate Mg(2+). The Topo IA-type catalytic domain occupies 129–558; that stretch reads NMDLVDAQQA…DFYKGFEERL (430 aa). The tract at residues 163 to 168 is interaction with DNA; that stretch reads SAGRVQ. The active-site O-(5'-phospho-DNA)-tyrosine intermediate is Y298. A disordered region spans residues 329–354; that stretch reads NGTKAVKKDKKSQDAHEAIRPTSVER. Over residues 339-354 the composition is skewed to basic and acidic residues; the sequence is KSQDAHEAIRPTSVER. 3 consecutive C4-type zinc fingers follow at residues 579 to 605, 619 to 647, and 660 to 683; these read CEKC…FPDC, CPKC…YPEC, and CPKC…CSSC.

This sequence belongs to the type IA topoisomerase family. In terms of assembly, monomer. Requires Mg(2+) as cofactor.

The catalysed reaction is ATP-independent breakage of single-stranded DNA, followed by passage and rejoining.. Its function is as follows. Releases the supercoiling and torsional tension of DNA, which is introduced during the DNA replication and transcription, by transiently cleaving and rejoining one strand of the DNA duplex. Introduces a single-strand break via transesterification at a target site in duplex DNA. The scissile phosphodiester is attacked by the catalytic tyrosine of the enzyme, resulting in the formation of a DNA-(5'-phosphotyrosyl)-enzyme intermediate and the expulsion of a 3'-OH DNA strand. The free DNA strand then undergoes passage around the unbroken strand, thus removing DNA supercoils. Finally, in the religation step, the DNA 3'-OH attacks the covalent intermediate to expel the active-site tyrosine and restore the DNA phosphodiester backbone. The protein is DNA topoisomerase 1 of Halalkalibacterium halodurans (strain ATCC BAA-125 / DSM 18197 / FERM 7344 / JCM 9153 / C-125) (Bacillus halodurans).